The sequence spans 453 residues: Bifunctional protein GlmU (453 aa).

Positions 1-226 (MLDILILAAG…IQEVEGINNR (226 aa)) are pyrophosphorylase. Residues 7-10 (LAAG), K21, Q72, 77-78 (GT), 99-101 (YGD), G136, E151, N166, and N224 contribute to the UDP-N-acetyl-alpha-D-glucosamine site. D101 provides a ligand contact to Mg(2+). A Mg(2+)-binding site is contributed by N224. The interval 227–247 (QQQATLERYYQQQQARALMDA) is linker. Residues 248–453 (GVTLLDPARF…QGWERPTRKS (206 aa)) form an N-acetyltransferase region. UDP-N-acetyl-alpha-D-glucosamine contacts are provided by R330 and K348. H360 functions as the Proton acceptor in the catalytic mechanism. Residues Y363 and N374 each coordinate UDP-N-acetyl-alpha-D-glucosamine. Acetyl-CoA-binding positions include A377, 383–384 (NY), S402, A420, and R437.

The protein in the N-terminal section; belongs to the N-acetylglucosamine-1-phosphate uridyltransferase family. This sequence in the C-terminal section; belongs to the transferase hexapeptide repeat family. Homotrimer. Requires Mg(2+) as cofactor.

Its subcellular location is the cytoplasm. It carries out the reaction alpha-D-glucosamine 1-phosphate + acetyl-CoA = N-acetyl-alpha-D-glucosamine 1-phosphate + CoA + H(+). It catalyses the reaction N-acetyl-alpha-D-glucosamine 1-phosphate + UTP + H(+) = UDP-N-acetyl-alpha-D-glucosamine + diphosphate. It participates in nucleotide-sugar biosynthesis; UDP-N-acetyl-alpha-D-glucosamine biosynthesis; N-acetyl-alpha-D-glucosamine 1-phosphate from alpha-D-glucosamine 6-phosphate (route II): step 2/2. The protein operates within nucleotide-sugar biosynthesis; UDP-N-acetyl-alpha-D-glucosamine biosynthesis; UDP-N-acetyl-alpha-D-glucosamine from N-acetyl-alpha-D-glucosamine 1-phosphate: step 1/1. Its pathway is bacterial outer membrane biogenesis; LPS lipid A biosynthesis. Its function is as follows. Catalyzes the last two sequential reactions in the de novo biosynthetic pathway for UDP-N-acetylglucosamine (UDP-GlcNAc). The C-terminal domain catalyzes the transfer of acetyl group from acetyl coenzyme A to glucosamine-1-phosphate (GlcN-1-P) to produce N-acetylglucosamine-1-phosphate (GlcNAc-1-P), which is converted into UDP-GlcNAc by the transfer of uridine 5-monophosphate (from uridine 5-triphosphate), a reaction catalyzed by the N-terminal domain. The polypeptide is Bifunctional protein GlmU (Cellvibrio japonicus (strain Ueda107) (Pseudomonas fluorescens subsp. cellulosa)).